The primary structure comprises 77 residues: Acyl carrier protein (77 aa).

The 76-residue stretch at 1–76 folds into the Carrier domain; sequence MATFDDVKAV…DVVNYIDNLK (76 aa). Position 36 is an O-(pantetheine 4'-phosphoryl)serine (serine 36).

The protein belongs to the acyl carrier protein (ACP) family. Post-translationally, 4'-phosphopantetheine is transferred from CoA to a specific serine of apo-ACP by AcpS. This modification is essential for activity because fatty acids are bound in thioester linkage to the sulfhydryl of the prosthetic group.

It localises to the cytoplasm. It participates in lipid metabolism; fatty acid biosynthesis. Carrier of the growing fatty acid chain in fatty acid biosynthesis. The protein is Acyl carrier protein of Campylobacter jejuni (strain RM1221).